The following is a 317-amino-acid chain: MPVLGSQRRLLGSLNCTPPATFPLTLAPNRTGPQCLEVAIPDGLFLSLGLVSLVENVLVVAAIAKNRNLQSPMYYFICCLAMSDLLVSVSNVLETAVMLLLEAGALAARAAVVQQLDNVIDVLICGSMVSSLCFLGAIAVDRYISIFYALRYHSVVTLPRAWRIIAAIWVASILTSLLFITYYNHTVVLLCLVGFFIAMLALMAVLYVHMLARACQHARGIARLQKRQRPIHQGFGLKGAATLTILLGVFFLCWGPFFLHLSLIVLCPQHPTCGCIFKNFNLFLALIICNAIVDPLIYAFRSQELRKTLQEVLQCSW.

Residues 1-37 (MPVLGSQRRLLGSLNCTPPATFPLTLAPNRTGPQCLE) are Extracellular-facing. Asn-29 carries an N-linked (GlcNAc...) asparagine glycan. A helical membrane pass occupies residues 38 to 63 (VAIPDGLFLSLGLVSLVENVLVVAAI). Topologically, residues 64-72 (AKNRNLQSP) are cytoplasmic. A helical transmembrane segment spans residues 73–93 (MYYFICCLAMSDLLVSVSNVL). The Extracellular portion of the chain corresponds to 94–118 (ETAVMLLLEAGALAARAAVVQQLDN). The helical transmembrane segment at 119–140 (VIDVLICGSMVSSLCFLGAIAV) threads the bilayer. Over 141–163 (DRYISIFYALRYHSVVTLPRAWR) the chain is Cytoplasmic. The chain crosses the membrane as a helical span at residues 164–183 (IIAAIWVASILTSLLFITYY). Topologically, residues 184-191 (NHTVVLLC) are extracellular. A helical transmembrane segment spans residues 192 to 211 (LVGFFIAMLALMAVLYVHML). Topologically, residues 212–240 (ARACQHARGIARLQKRQRPIHQGFGLKGA) are cytoplasmic. The helical transmembrane segment at 241–266 (ATLTILLGVFFLCWGPFFLHLSLIVL) threads the bilayer. Residues 267–279 (CPQHPTCGCIFKN) are Extracellular-facing. The helical transmembrane segment at 280–300 (FNLFLALIICNAIVDPLIYAF) threads the bilayer. Residues 301–317 (RSQELRKTLQEVLQCSW) are Cytoplasmic-facing. Residue Cys-315 is the site of S-palmitoyl cysteine attachment.

It belongs to the G-protein coupled receptor 1 family. Interacts with MGRN1, but does not undergo MGRN1-mediated ubiquitination; this interaction competes with GNAS-binding and thus inhibits agonist-induced cAMP production. Interacts with OPN3; the interaction results in a decrease in MC1R-mediated cAMP signaling and ultimately a decrease in melanin production in melanocytes.

It is found in the cell membrane. Receptor for MSH (alpha, beta and gamma) and ACTH. The activity of this receptor is mediated by G proteins which activate adenylate cyclase. Mediates melanogenesis, the production of eumelanin (black/brown) and phaeomelanin (red/yellow), via regulation of cAMP signaling in melanocytes. This is Melanocyte-stimulating hormone receptor (MC1R) from Cervus elaphus (Red deer).